The chain runs to 319 residues: HTH-type transcriptional regulator YidZ (319 aa).

An HTH lysR-type domain is found at 8–65; the sequence is LDLNLLLCLQLLMQERSVTKAAKRMNVTPSAVSKSLAKLRAWFDDPLFVNSPLGLSPT. The segment at residues 25–44 is a DNA-binding region (H-T-H motif); sequence VTKAAKRMNVTPSAVSKSLA.

It belongs to the LysR transcriptional regulatory family.

Functionally, involved in anaerobic NO protection. In Escherichia coli O6:H1 (strain CFT073 / ATCC 700928 / UPEC), this protein is HTH-type transcriptional regulator YidZ.